The primary structure comprises 151 residues: Myosin catalytic light chain, smooth muscle (151 aa).

Position 1 is an N-acetylalanine (Ala-1). EF-hand domains follow at residues 6–41 (DRITECQEAFELFDRSAEGKVFLGQVGDILRALGQN), 83–118 (GSYEDFVEGLRVFDKENNGKIMGAELRHVLSTLGEK), and 119–151 (MSEEEVEESLLQGQQDPNGCIHYEEFSKYLLEG).

Functionally, in molluscan muscle, calcium regulation is associated with myosin rather than with actin. Muscle myosin contains two types of light chains: the catalytic light chain, essential for ATPase activity, and the regulatory light chain, a calcium-binding protein responsible for Ca(2+) dependent binding and Ca(2+) dependent Mg-ATPase activity. The chain is Myosin catalytic light chain, smooth muscle from Halocynthia roretzi (Sea squirt).